A 516-amino-acid polypeptide reads, in one-letter code: Cytochrome P450 1A2 (516 aa).

A glycan (O-linked (GlcNAc) serine) is linked at Ser69. Phe226 contributes to the substrate binding site. Residue Cys458 participates in heme binding.

It belongs to the cytochrome P450 family. In terms of assembly, interacts with PGRMC1; the interaction requires PGRMC1 homodimerization. Requires heme as cofactor.

The protein resides in the endoplasmic reticulum membrane. It is found in the microsome membrane. It catalyses the reaction an organic molecule + reduced [NADPH--hemoprotein reductase] + O2 = an alcohol + oxidized [NADPH--hemoprotein reductase] + H2O + H(+). It carries out the reaction 17beta-estradiol + reduced [NADPH--hemoprotein reductase] + O2 = 2-hydroxy-17beta-estradiol + oxidized [NADPH--hemoprotein reductase] + H2O + H(+). The enzyme catalyses 17beta-estradiol + reduced [NADPH--hemoprotein reductase] + O2 = 4-hydroxy-17beta-estradiol + oxidized [NADPH--hemoprotein reductase] + H2O + H(+). The catalysed reaction is estrone + reduced [NADPH--hemoprotein reductase] + O2 = 2-hydroxyestrone + oxidized [NADPH--hemoprotein reductase] + H2O + H(+). It catalyses the reaction estrone + reduced [NADPH--hemoprotein reductase] + O2 = 4-hydroxyestrone + oxidized [NADPH--hemoprotein reductase] + H2O + H(+). It carries out the reaction cholesterol + reduced [NADPH--hemoprotein reductase] + O2 = 25-hydroxycholesterol + oxidized [NADPH--hemoprotein reductase] + H2O + H(+). The enzyme catalyses all-trans-retinol + reduced [NADPH--hemoprotein reductase] + O2 = all-trans-retinal + oxidized [NADPH--hemoprotein reductase] + 2 H2O + H(+). The catalysed reaction is all-trans-retinal + reduced [NADPH--hemoprotein reductase] + O2 = all-trans-retinoate + oxidized [NADPH--hemoprotein reductase] + H2O + 2 H(+). It catalyses the reaction (5Z,8Z,11Z,14Z)-eicosatetraenoate + reduced [NADPH--hemoprotein reductase] + O2 = (14R,15S)-epoxy-(5Z,8Z,11Z)-eicosatrienoate + oxidized [NADPH--hemoprotein reductase] + H2O + H(+). It carries out the reaction (5Z,8Z,11Z,14Z)-eicosatetraenoate + reduced [NADPH--hemoprotein reductase] + O2 = (14S,15R)-epoxy-(5Z,8Z,11Z)-eicosatrienoate + oxidized [NADPH--hemoprotein reductase] + H2O + H(+). The enzyme catalyses (5Z,8Z,11Z,14Z,17Z)-eicosapentaenoate + reduced [NADPH--hemoprotein reductase] + O2 = (17R,18S)-epoxy-(5Z,8Z,11Z,14Z)-eicosatetraenoate + oxidized [NADPH--hemoprotein reductase] + H2O + H(+). The catalysed reaction is (4Z,7Z,10Z,13Z,16Z,19Z)-docosahexaenoate + reduced [NADPH--hemoprotein reductase] + O2 = (19R,20S)-epoxy-(4Z,7Z,10Z,13Z,16Z)-docosapentaenoate + oxidized [NADPH--hemoprotein reductase] + H2O + H(+). It catalyses the reaction (5S)-hydroperoxy-(6E,8Z,11Z,14Z)-eicosatetraenoate = 5-oxo-(6E,8Z,11Z,14Z)-eicosatetraenoate + H2O. It carries out the reaction (12S)-hydroperoxy-(5Z,8Z,10E,14Z)-eicosatetraenoate = 12-oxo-(5Z,8Z,10E,14Z)-eicosatetraenoate + H2O. The enzyme catalyses (15S)-hydroperoxy-(5Z,8Z,11Z,13E)-eicosatetraenoate = 15-oxo-(5Z,8Z,11Z,13E)-eicosatetraenoate + H2O. The catalysed reaction is (13S)-hydroperoxy-(9Z,11E)-octadecadienoate = 13-oxo-(9Z,11E)-octadecadienoate + H2O. It catalyses the reaction (5Z,8Z,11Z,14Z)-eicosatetraenoate + reduced [NADPH--hemoprotein reductase] + O2 = 13-hydroxy-(5Z,8Z,11Z,14Z)-eicosatetraenoate + oxidized [NADPH--hemoprotein reductase] + H2O + H(+). It carries out the reaction (5Z,8Z,11Z,14Z)-eicosatetraenoate + reduced [NADPH--hemoprotein reductase] + O2 = 19-hydroxy-(5Z,8Z,11Z,14Z)-eicosatetraenoate + oxidized [NADPH--hemoprotein reductase] + H2O + H(+). The enzyme catalyses (9Z,12Z)-octadecadienoate + reduced [NADPH--hemoprotein reductase] + O2 = 11-hydroxy-(9Z,12Z)-octadecadienoate + oxidized [NADPH--hemoprotein reductase] + H2O + H(+). The protein operates within cofactor metabolism; retinol metabolism. It participates in steroid metabolism; cholesterol metabolism. Its pathway is lipid metabolism; arachidonate metabolism. A cytochrome P450 monooxygenase involved in the metabolism of various endogenous substrates, including fatty acids, steroid hormones and vitamins. Mechanistically, uses molecular oxygen inserting one oxygen atom into a substrate, and reducing the second into a water molecule, with two electrons provided by NADPH via cytochrome P450 reductase (NADPH--hemoprotein reductase). Catalyzes the hydroxylation of carbon-hydrogen bonds. Exhibits high catalytic activity for the formation of hydroxyestrogens from estrone (E1) and 17beta-estradiol (E2), namely 2-hydroxy E1 and E2. Metabolizes cholesterol toward 25-hydroxycholesterol, a physiological regulator of cellular cholesterol homeostasis. May act as a major enzyme for all-trans retinoic acid biosynthesis in the liver. Catalyzes two successive oxidative transformation of all-trans retinol to all-trans retinal and then to the active form all-trans retinoic acid. Primarily catalyzes stereoselective epoxidation of the last double bond of polyunsaturated fatty acids (PUFA), displaying a strong preference for the (R,S) stereoisomer. Catalyzes bisallylic hydroxylation and omega-1 hydroxylation of PUFA. May also participate in eicosanoids metabolism by converting hydroperoxide species into oxo metabolites (lipoxygenase-like reaction, NADPH-independent). Plays a role in the oxidative metabolism of xenobiotics. Catalyzes the N-hydroxylation of heterocyclic amines and the O-deethylation of phenacetin. Metabolizes caffeine via N3-demethylation. The protein is Cytochrome P450 1A2 (CYP1A2) of Callithrix jacchus (White-tufted-ear marmoset).